The chain runs to 627 residues: MITFKSIALTIIFLSYFVSCVSSQRETKFLNHGFLGANLLNFGSSKVYPSGLLELTNTSMRQIGQAFHGFPIPLSNPNSTNSVSFSTSFIFAITQGTGAPGHGLAFVISPSMDFSGAFPSNYLGLFNTSNNGNSLNRILAIEFDTVQAVELNDIDDNHVGIDLNGVISIASAPAAYFDDREAKNISLRLASGKPVRVWIEYNATETMLNVTLAPLDRPKPSIPLLSRKMNLSGIFSQEHHVGFSASTGTVASSHFVLGWSFNIEGKESDFDITKLPSLPDPPPTLSPSPSPPVSTEKKSNNTMLIIIVAASATVALMILIFSGFWFLRRDKIFFIGGARKFSYQTISNATGGFDNSKLLGERNSGSFYKGQLAPTEIIAVKKITCTTRQQKTTLIAEIDAISKIKQRNLVNLHGYCSKGKDIYLVYEYVPNGSLDRFLFNNDRPVLTWSDRFCIIKGIAAALQHLHGEGQKPLIHGNVKASNVLLDEELNARLGDYGQGSRHSTTGHVAPELVNTGKVTRDTDVFAFGVLMMEIVCGRKAIEPTKAPEEISLVNWVLQGFKKGDLLMSCDTRINRENLVAREVLLVLKTGLLCANRSPESRPMMKNVFRYLEGTEALPHDDYLFYGV.

Residues 1-23 (MITFKSIALTIIFLSYFVSCVSS) form the signal peptide. Residues 24–303 (QRETKFLNHG…STEKKSNNTM (280 aa)) lie on the Extracellular side of the membrane. The legume-lectin like stretch occupies residues 26-262 (ETKFLNHGFL…SHFVLGWSFN (237 aa)). 7 N-linked (GlcNAc...) asparagine glycosylation sites follow: asparagine 57, asparagine 78, asparagine 127, asparagine 184, asparagine 202, asparagine 209, and asparagine 230. Residues 272-297 (ITKLPSLPDPPPTLSPSPSPPVSTEK) are disordered. Residues 278–292 (LPDPPPTLSPSPSPP) are compositionally biased toward pro residues. Residue asparagine 300 is glycosylated (N-linked (GlcNAc...) asparagine). The helical transmembrane segment at 304 to 324 (LIIIVAASATVALMILIFSGF) threads the bilayer. Residues 325–627 (WFLRRDKIFF…PHDDYLFYGV (303 aa)) are Cytoplasmic-facing. A Protein kinase domain is found at 353-623 (FDNSKLLGER…TEALPHDDYL (271 aa)). ATP contacts are provided by residues 359–367 (LGERNSGSF) and lysine 381.

The protein in the C-terminal section; belongs to the protein kinase superfamily. Ser/Thr protein kinase family. In the N-terminal section; belongs to the leguminous lectin family.

It localises to the cell membrane. The protein is Probable inactive L-type lectin-domain containing receptor kinase III.1 (LECRK31) of Arabidopsis thaliana (Mouse-ear cress).